Here is a 317-residue protein sequence, read N- to C-terminus: Tumor-associated calcium signal transducer 2 (317 aa).

An N-terminal signal peptide occupies residues 1 to 24 (MARGLDLAPLLLLLLAMATRFCTA). Topologically, residues 25–270 (QSNCTCPTNK…QFSMKRLTAG (246 aa)) are extracellular. Residue Asn-27 is glycosylated (N-linked (GlcNAc...) asparagine). Residues 64 to 139 (TSKCLLLKAR…TDKGDQSLRC (76 aa)) form the Thyroglobulin type-1 domain. 3 disulfides stabilise this stretch: Cys-67–Cys-102, Cys-113–Cys-119, and Cys-121–Cys-139. N-linked (GlcNAc...) asparagine glycosylation occurs at Asn-114. N-linked (GlcNAc...) asparagine glycans are attached at residues Asn-162 and Asn-202. A helical membrane pass occupies residues 271–291 (VIAVIAVVSVAVVAGVVVLVV). Residues 292–317 (TKRRKSGKYKKVELKELGEMRSEPSL) are Cytoplasmic-facing.

This sequence belongs to the EPCAM family. As to expression, expressed in kidney, lung, ovary and testis. High levels of expression in immortalized keratinocytes.

It is found in the membrane. In terms of biological role, may function as a growth factor receptor. This is Tumor-associated calcium signal transducer 2 (Tacstd2) from Mus musculus (Mouse).